The following is a 185-amino-acid chain: Ribosome-recycling factor (185 aa).

The protein belongs to the RRF family.

It localises to the cytoplasm. Its function is as follows. Responsible for the release of ribosomes from messenger RNA at the termination of protein biosynthesis. May increase the efficiency of translation by recycling ribosomes from one round of translation to another. The polypeptide is Ribosome-recycling factor (Mycobacterium bovis (strain BCG / Pasteur 1173P2)).